The primary structure comprises 198 residues: Carnitine operon protein CaiE (198 aa).

The segment at 179-198 is disordered; the sequence is VEENRPRLKGTTDVKPKSAQ. A compositionally biased stretch (basic and acidic residues) spans 180–198; the sequence is EENRPRLKGTTDVKPKSAQ.

It belongs to the transferase hexapeptide repeat family.

It participates in amine and polyamine metabolism; carnitine metabolism. Its function is as follows. Overproduction of CaiE stimulates the activity of CaiB and CaiD. In Salmonella typhi, this protein is Carnitine operon protein CaiE.